The chain runs to 162 residues: uncharacterized protein (162 aa).

This sequence to R.meliloti R02472.

This is an uncharacterized protein from Escherichia coli (strain K12).